We begin with the raw amino-acid sequence, 208 residues long: Uracil phosphoribosyltransferase (208 aa).

5-phospho-alpha-D-ribose 1-diphosphate contacts are provided by residues Arg78, Arg103, and 130–138; that span reads DPMLATGVS. Residues Ile193 and 198–200 contribute to the uracil site; that span reads GDA. Asp199 is a binding site for 5-phospho-alpha-D-ribose 1-diphosphate.

It belongs to the UPRTase family. Mg(2+) is required as a cofactor.

It carries out the reaction UMP + diphosphate = 5-phospho-alpha-D-ribose 1-diphosphate + uracil. The protein operates within pyrimidine metabolism; UMP biosynthesis via salvage pathway; UMP from uracil: step 1/1. Its activity is regulated as follows. Allosterically activated by GTP. Catalyzes the conversion of uracil and 5-phospho-alpha-D-ribose 1-diphosphate (PRPP) to UMP and diphosphate. This chain is Uracil phosphoribosyltransferase, found in Thermosipho africanus (strain TCF52B).